The following is a 455-amino-acid chain: Putative RNA polymerase II subunit B1 CTD phosphatase rpap-2 (455 aa).

The segment at 36–121 adopts an RTR1-type zinc-finger fold; it reads EHLPHLHCLG…LDEHPLWITG (86 aa). Zn(2+)-binding residues include Cys59, Cys64, Cys97, and Cys101.

It belongs to the RPAP2 family.

The protein localises to the nucleus. It catalyses the reaction O-phospho-L-seryl-[protein] + H2O = L-seryl-[protein] + phosphate. It carries out the reaction O-phospho-L-threonyl-[protein] + H2O = L-threonyl-[protein] + phosphate. Putative RNA polymerase II subunit B1 C-terminal domain (CTD) phosphatase involved in RNA polymerase II transcription regulation. The protein is Putative RNA polymerase II subunit B1 CTD phosphatase rpap-2 of Caenorhabditis elegans.